We begin with the raw amino-acid sequence, 251 residues long: NLP effector protein Pc129485 (251 aa).

The signal sequence occupies residues 1–19 (MNFRIVLLVLVASLAGAQA). The Hepta-peptide GHRHDWE motif signature appears at 127–133 (GHRHNWE). Residues asparagine 146 and asparagine 218 are each glycosylated (N-linked (GlcNAc...) asparagine).

The protein belongs to the Necrosis inducing protein (NPP1) family.

It is found in the secreted. Its function is as follows. Secreted effector that contributes strongly to virulence during infection by P.capsici. This chain is NLP effector protein Pc129485, found in Phytophthora capsici.